The sequence spans 377 residues: MQTSPDLTSARSVIRLLLFAKSRAVVAELEEHLRQHIQGLPGQYPAQLEVVPLEEHPYLAEHYKLVATPALVKAEPLPAQVLAGADLATQLEVWWPRWQGQAALAAHQEGAGRDPASPPTTEALLQMSEEVFLLRQERAQLREQLDFKDRVLAMLVHDLRSPLTATALAVETLQQGREGSLDKALERQLFDHARQQLRKMDSMITDILESARGAASELRIRAVETQLPGLCQAVIEELWPRIQGKRLQFQADIPVDLPSVHVDPDKIRQVLFNLLDNAIKYTPAGGSIRLDVLHRTSQKVQVTVSDTGPGIPEADQESIFSDSVRLSRDQQQEGYGIGLSLCRRIVRAHYGQIWVESSLGKGSSFHFTLPVYRLCKR.

The Histidine kinase domain occupies 154–373 (MLVHDLRSPL…SFHFTLPVYR (220 aa)). Position 157 is a phosphohistidine; by autocatalysis (histidine 157).

In terms of assembly, homooligomerizes. Interacts with KaiC. Participates in the KaiABC clock complex, whose core is composed of a KaiC homohexamer, 6 KaiB and up to 6 KaiA dimers. SasA and KaiB(fs) compete to bind to KaiC.

It catalyses the reaction ATP + protein L-histidine = ADP + protein N-phospho-L-histidine.. Its function is as follows. Member of the two-component regulatory system SasA/RpaA involved in genome-wide circadian gene expression. One of several clock output pathways. Participates in the Kai clock protein complex, the main circadian regulator in cyanobacteria, via its interaction with KaiC. KaiC enhances the autophosphorylation activity of SasA, which then transfers its phosphate group to RpaA to activate it. In addition to its output function, recruits fold-shifted KaiB (KaiB(fs)) to KaiC to cooperatively form the KaiB(6):KaiC(6) complex (independent of SasA kinase activity). Required for robustness of the circadian rhythm of gene expression and is involved in clock output, also required for adaptation to light/dark cycles. This Synechococcus sp. (strain JA-2-3B'a(2-13)) (Cyanobacteria bacterium Yellowstone B-Prime) protein is Adaptive-response sensory kinase SasA.